A 739-amino-acid chain; its full sequence is MKKTTIPTLSALTLAMSLAFGGAAIAQEQVTGNQFWWPEQLNLSPLRQNAVESNPYGSDYHYAEAFKSLDLDAVKKDIKALMTESQDWWPADYGHYGPFFIRMAWHSAGVYRIFDGRGGAAGGQQRFEPLNSWPDNVNLDKARRLLWPIKQKYGSKISWGDLMVFTGNVALESMGFKTFGFAGGRVDDWEAEQVNWGSEKAWLDSKRRNEKGELAKPMGATQMGLIYVNPEGPNGVPDPLASAKEIRDTFGRMAMNDEETVALIAGGHTFGKAHGAHDPSKCVGADPAASGVEAQGLGWKNKCGKGHSEDTVTSGLEGAWSSNPTKWTMEYLTWLYTFDWVQTKSPAGHIQWIPADGKAANLIPDAHIADKRHAPMMFTSDIALKEDPIYREITTRFLKNPQEFELAFAKAWFKLTHRDMGPKARYLGADVPAEMLIWQDPIPALDHLVIDNADIKALGNKILASGLTVPELVRTAWASASSFRGTDMRGGANGARIRLEPMMNWQANNPKELAKVLAKLEKVQKDFNGSLKGGKKVSLADVIVLGGSVAVEKAAKEAGVAVSVPFTPGRMDATQAQTDVSSFAVLEPTADGFRNYYSKDSSHSPAEMLIERANMLNLTVPEMTVLVGGLRALDANSAGVKHGVFTDKPGTLSNDFFVNLLDMSTKWSKSEKQEGIYEGQDRKSGKLKWTATPVDLVFGSHSELRAVSEVYGAQDGQDRFVQDFIKAWNKVMNADRFDI.

Residues 1 to 26 form the signal peptide; sequence MKKTTIPTLSALTLAMSLAFGGAAIA. Positions 105–227 form a cross-link, tryptophyl-tyrosyl-methioninium (Trp-Tyr) (with M-253); the sequence is WHSAGVYRIF…MGATQMGLIY (123 aa). Catalysis depends on His106, which acts as the Proton acceptor. Residues 227-253 constitute a cross-link (tryptophyl-tyrosyl-methioninium (Tyr-Met) (with W-105)); the sequence is YVNPEGPNGVPDPLASAKEIRDTFGRM. His268 provides a ligand contact to heme b.

It belongs to the peroxidase family. Peroxidase/catalase subfamily. As to quaternary structure, homodimer or homotetramer. Heme b is required as a cofactor. In terms of processing, formation of the three residue Trp-Tyr-Met cross-link is important for the catalase, but not the peroxidase activity of the enzyme.

The enzyme catalyses H2O2 + AH2 = A + 2 H2O. It catalyses the reaction 2 H2O2 = O2 + 2 H2O. In terms of biological role, bifunctional enzyme with both catalase and broad-spectrum peroxidase activity. In Shewanella sp. (strain MR-4), this protein is Catalase-peroxidase 2.